Consider the following 65-residue polypeptide: MPKIKTLRSAAKRFKKTASGKFKRKQANLRHILTKKTTTKKRHLRPKILVSKGDISKVKSFLPYF.

The interval 1-22 (MPKIKTLRSAAKRFKKTASGKF) is disordered. The segment covering 10 to 22 (AAKRFKKTASGKF) has biased composition (basic residues).

Belongs to the bacterial ribosomal protein bL35 family.

In Buchnera aphidicola subsp. Schizaphis graminum (strain Sg), this protein is Large ribosomal subunit protein bL35.